The chain runs to 147 residues: uncharacterized protein (147 aa).

It belongs to the MG185/MG260 family.

This is an uncharacterized protein from Mycoplasma pneumoniae (strain ATCC 29342 / M129 / Subtype 1) (Mycoplasmoides pneumoniae).